We begin with the raw amino-acid sequence, 291 residues long: Oxidative stress-responsive serine-rich protein 1 (291 aa).

Positions 44 to 139 (RTTVDDTKPK…STGENSTSLD (96 aa)) are disordered. Over residues 65–83 (STRKSSRGAVRIQRRRRSK) the composition is skewed to basic residues. 2 stretches are compositionally biased toward polar residues: residues 95-113 (CSTT…SQTE) and 127-139 (KEFS…TSLD). Phosphothreonine is present on T143.

As to expression, ubiquitous with high level in testis, placenta and cardiac myocytes. Expressed in testis, unpreganant uterus and cardiac myocytes.

The protein is Oxidative stress-responsive serine-rich protein 1 (Oser1) of Rattus norvegicus (Rat).